The primary structure comprises 633 residues: DNA topoisomerase 4 subunit B (633 aa).

Residues tyrosine 5, asparagine 45, aspartate 72, 113 to 119 (GLHGVGA), and lysine 337 contribute to the ATP site. Residues 419–534 (KELFIVEGDS…LGHVYLALPP (116 aa)) form the Toprim domain. 3 residues coordinate Mg(2+): glutamate 425, aspartate 499, and aspartate 501.

This sequence belongs to the type II topoisomerase family. ParE type 2 subfamily. Heterotetramer composed of ParC and ParE. Requires Mg(2+) as cofactor. The cofactor is Mn(2+). It depends on Ca(2+) as a cofactor.

The catalysed reaction is ATP-dependent breakage, passage and rejoining of double-stranded DNA.. Topoisomerase IV is essential for chromosome segregation. It relaxes supercoiled DNA. Performs the decatenation events required during the replication of a circular DNA molecule. In Mycoplasma genitalium (strain ATCC 33530 / DSM 19775 / NCTC 10195 / G37) (Mycoplasmoides genitalium), this protein is DNA topoisomerase 4 subunit B.